The primary structure comprises 308 residues: Aspartate carbamoyltransferase catalytic subunit (308 aa).

The carbamoyl phosphate site is built by R55 and T56. K83 provides a ligand contact to L-aspartate. Residues R105, H133, and Q136 each coordinate carbamoyl phosphate. Residues R166 and R220 each contribute to the L-aspartate site. Residues G261 and P262 each coordinate carbamoyl phosphate.

The protein belongs to the aspartate/ornithine carbamoyltransferase superfamily. ATCase family. Heterododecamer (2C3:3R2) of six catalytic PyrB chains organized as two trimers (C3), and six regulatory PyrI chains organized as three dimers (R2).

It carries out the reaction carbamoyl phosphate + L-aspartate = N-carbamoyl-L-aspartate + phosphate + H(+). It participates in pyrimidine metabolism; UMP biosynthesis via de novo pathway; (S)-dihydroorotate from bicarbonate: step 2/3. Its function is as follows. Catalyzes the condensation of carbamoyl phosphate and aspartate to form carbamoyl aspartate and inorganic phosphate, the committed step in the de novo pyrimidine nucleotide biosynthesis pathway. The polypeptide is Aspartate carbamoyltransferase catalytic subunit (Chlorobaculum tepidum (strain ATCC 49652 / DSM 12025 / NBRC 103806 / TLS) (Chlorobium tepidum)).